The sequence spans 175 residues: DELTA-stichotoxin-She4b (175 aa).

The interval 1-10 (ALAGTIIAGA) is plays an important role in the hemolytic activity. The N-terminal region stretch occupies residues 9-28 (GASLTFQVLDKVLEELGKVS). Positions 52, 85, 103, 105, 131, 135, and 136 each coordinate phosphocholine. The trp-rich region, which is important for the binding to lipid membrane stretch occupies residues 103–118 (SVPFDYNWYSNWWDVK). The Cell attachment site, crucial for protein stability motif lies at 141-143 (RGD).

As to quaternary structure, octamer or nonamer in membranes. Monomer in the soluble state. Originally described as forming tetramer in the presence of a lipidic interface. As to expression, expressed in tentacles and mesenteric filaments.

It is found in the secreted. It localises to the nematocyst. The protein resides in the target cell membrane. Pore-forming protein that forms cations-selective hydrophilic pores of around 1 nm and causes cardiac stimulation and cytolysis. Pore formation is a multi-step process that involves specific recognition of membrane sphingomyelin (but neither cholesterol nor phosphatidylcholine) using aromatic rich region and adjacent phosphocholine (POC) binding site, firm binding to the membrane (mainly driven by hydrophobic interactions) accompanied by the transfer of the N-terminal region to the lipid-water interface and finally pore formation after oligomerization of monomers. Cytolytic effects include red blood cells hemolysis, platelet aggregation and lysis, cytotoxic and cytostatic effects on fibroblasts. Lethality in mammals has been ascribed to severe vasospasm of coronary vessels, cardiac arrhythmia, and inotropic effects. In Stichodactyla helianthus (Sun anemone), this protein is DELTA-stichotoxin-She4b.